Consider the following 110-residue polypeptide: ATP synthase subunit c (110 aa).

The next 3 helical transmembrane spans lie at 4–24, 37–57, and 81–101; these read FFVILMVALVVVLTASAVFAA, ATAGALIGLGAAAGGGGAGMG, and FIVGLALIESLVIYVLVFVLI.

The protein belongs to the ATPase C chain family. In terms of assembly, F-type ATPases have 2 components, F(1) - the catalytic core - and F(0) - the membrane proton channel. F(1) has five subunits: alpha(3), beta(3), gamma(1), delta(1), epsilon(1). F(0) has three main subunits: a(1), b(2) and c(10-14). The alpha and beta chains form an alternating ring which encloses part of the gamma chain. F(1) is attached to F(0) by a central stalk formed by the gamma and epsilon chains, while a peripheral stalk is formed by the delta and b chains.

The protein localises to the cell inner membrane. Functionally, f(1)F(0) ATP synthase produces ATP from ADP in the presence of a proton or sodium gradient. F-type ATPases consist of two structural domains, F(1) containing the extramembraneous catalytic core and F(0) containing the membrane proton channel, linked together by a central stalk and a peripheral stalk. During catalysis, ATP synthesis in the catalytic domain of F(1) is coupled via a rotary mechanism of the central stalk subunits to proton translocation. In terms of biological role, key component of the F(0) channel; it plays a direct role in translocation across the membrane. A homomeric c-ring of between 10-14 subunits forms the central stalk rotor element with the F(1) delta and epsilon subunits. The sequence is that of ATP synthase subunit c from Thermodesulfovibrio yellowstonii (strain ATCC 51303 / DSM 11347 / YP87).